Reading from the N-terminus, the 124-residue chain is Heat-labile enterotoxin B chain (124 aa).

An N-terminal signal peptide occupies residues Met-1–Gly-21. A disulfide bond links Cys-30 and Cys-107.

In terms of assembly, heterohexamer of one A chain and of five B chains.

The biological activity of the toxin is produced by the A chain, which activates intracellular adenyl cyclase. In Escherichia coli, this protein is Heat-labile enterotoxin B chain (eltB).